The following is a 288-amino-acid chain: 18S rRNA aminocarboxypropyltransferase (288 aa).

S-adenosyl-L-methionine contacts are provided by Ser-43, Val-91, Leu-114, and Trp-129. Polar residues predominate over residues Ile-209–Leu-221. A disordered region spans residues Ile-209 to Asn-267. Residues Asn-229–Pro-253 show a composition bias toward basic and acidic residues.

The protein belongs to the TDD superfamily. TSR3 family.

It localises to the cytoplasm. The protein resides in the nucleus. The catalysed reaction is an N(1)-methylpseudouridine in rRNA + S-adenosyl-L-methionine = N(1)-methyl-N(3)-[(3S)-3-amino-3-carboxypropyl]pseudouridine in rRNA + S-methyl-5'-thioadenosine + H(+). The enzyme catalyses N(1)-methylpseudouridine(1191) in yeast 18S rRNA + S-adenosyl-L-methionine = N(1)-methyl-N(3)-[(3S)-3-amino-3-carboxypropyl]pseudouridine(1191) in yeast 18S rRNA + S-methyl-5'-thioadenosine + H(+). In terms of biological role, aminocarboxypropyltransferase that catalyzes the aminocarboxypropyl transfer on pseudouridine at position 1191 (Psi1191) in 18S rRNA. It constitutes the last step in biosynthesis of the hypermodified N1-methyl-N3-(3-amino-3-carboxypropyl) pseudouridine (m1acp3-Psi) conserved in eukaryotic 18S rRNA. Required for processing 35S pre-rRNA at site D. In Schizosaccharomyces pombe (strain 972 / ATCC 24843) (Fission yeast), this protein is 18S rRNA aminocarboxypropyltransferase.